A 358-amino-acid chain; its full sequence is Chondroadherin (358 aa).

Positions 1-20 are cleaved as a signal peptide; sequence MARALLFSLVFLAILLPALA. Positions 21 to 50 constitute an LRRNT domain; the sequence is ACPQNCHCHGDLQHVICDKVGLQKIPKVSE. A disulfide bond links cysteine 22 and cysteine 37. 10 LRR repeats span residues 51–72, 75–96, 99–120, 123–144, 147–168, 171–192, 195–216, 219–240, 244–265, and 268–289; these read TTKL…SFRT, NLVS…AFRG, QLIY…AFDD, ELTY…LLSP, NLFI…AFQG, DLRW…SLDD, NLAK…ALSK, VVEE…AFQS, YLET…AFSG, and TLKH…FPFD. O-linked (GalNAc...) serine glycosylation occurs at serine 143. The LRRCT domain maps to 299–347; that stretch reads NPWKCTCQLRGLRRWLEAKASRPDATCSSPAKFKGQRIRDTDALRSCKS. Intrachain disulfides connect cysteine 303–cysteine 345 and cysteine 305–cysteine 325. A disordered region spans residues 322–358; it reads DATCSSPAKFKGQRIRDTDALRSCKSPTKRSKKAGRH. Residues 348 to 358 show a composition bias toward basic residues; sequence PTKRSKKAGRH.

This sequence belongs to the small leucine-rich proteoglycan (SLRP) family. SLRP class IV subfamily. Mostly monomeric. Interacts with collagen type II. In terms of tissue distribution, cartilage.

The protein localises to the secreted. It is found in the extracellular space. The protein resides in the extracellular matrix. Promotes attachment of chondrocytes, fibroblasts, and osteoblasts. This binding is mediated (at least for chondrocytes and fibroblasts) by the integrin alpha(2)beta(1). May play an important role in the regulation of chondrocyte growth and proliferation. This chain is Chondroadherin (Chad), found in Mus musculus (Mouse).